A 93-amino-acid polypeptide reads, in one-letter code: Small ribosomal subunit protein uS19 (93 aa).

It belongs to the universal ribosomal protein uS19 family.

Its function is as follows. Protein S19 forms a complex with S13 that binds strongly to the 16S ribosomal RNA. The polypeptide is Small ribosomal subunit protein uS19 (Limosilactobacillus fermentum (strain NBRC 3956 / LMG 18251) (Lactobacillus fermentum)).